We begin with the raw amino-acid sequence, 243 residues long: Outer membrane protein A (243 aa).

5 beta stranded membrane-spanning segments follow: residues 1–8, 13–21, 48–57, 62–69, and 88–96; these read LTAKLGYP, LDIYTRLGG, PVFAGGVEWA, IATRLEYQ, and LLSLGVSYR. Tandem repeats lie at residues 107 to 108, 109 to 110, 111 to 112, and 113 to 114. The tract at residues 107-114 is 4 X 2 AA tandem repeats of A-P; that stretch reads APAPAPAP. The region spanning 116 to 243 is the OmpA-like domain; that stretch reads VQTKHFTLKS…RRVEIEVKGI (128 aa). A disulfide bridge connects residues Cys217 and Cys229.

The protein belongs to the outer membrane OOP (TC 1.B.6) superfamily. OmpA family. Monomer and homodimer.

It localises to the cell outer membrane. With TolR probably plays a role in maintaining the position of the peptidoglycan cell wall in the periplasm. Acts as a porin with low permeability that allows slow penetration of small solutes; an internal gate slows down solute passage. In terms of biological role, required for conjugation with F-type plasmids; probably serves as the mating receptor on recipient cells. This is Outer membrane protein A from Escherichia fergusonii.